The following is a 177-amino-acid chain: 3-hydroxydecanoyl-[acyl-carrier-protein] dehydratase (177 aa).

Residue His76 is part of the active site.

Belongs to the thioester dehydratase family. FabA subfamily. Homodimer.

It localises to the cytoplasm. It carries out the reaction a (3R)-hydroxyacyl-[ACP] = a (2E)-enoyl-[ACP] + H2O. The enzyme catalyses (3R)-hydroxydecanoyl-[ACP] = (2E)-decenoyl-[ACP] + H2O. The catalysed reaction is (2E)-decenoyl-[ACP] = (3Z)-decenoyl-[ACP]. The protein operates within lipid metabolism; fatty acid biosynthesis. In terms of biological role, necessary for the introduction of cis unsaturation into fatty acids. Catalyzes the dehydration of (3R)-3-hydroxydecanoyl-ACP to E-(2)-decenoyl-ACP and then its isomerization to Z-(3)-decenoyl-ACP. Can catalyze the dehydratase reaction for beta-hydroxyacyl-ACPs with saturated chain lengths up to 16:0, being most active on intermediate chain length. In Actinobacillus succinogenes (strain ATCC 55618 / DSM 22257 / CCUG 43843 / 130Z), this protein is 3-hydroxydecanoyl-[acyl-carrier-protein] dehydratase.